The sequence spans 292 residues: Ribosomal RNA small subunit methyltransferase A (292 aa).

Residues Asn-28, Leu-30, Gly-55, Glu-76, Asp-101, and Asn-126 each contribute to the S-adenosyl-L-methionine site.

This sequence belongs to the class I-like SAM-binding methyltransferase superfamily. rRNA adenine N(6)-methyltransferase family. RsmA subfamily.

It localises to the cytoplasm. It carries out the reaction adenosine(1518)/adenosine(1519) in 16S rRNA + 4 S-adenosyl-L-methionine = N(6)-dimethyladenosine(1518)/N(6)-dimethyladenosine(1519) in 16S rRNA + 4 S-adenosyl-L-homocysteine + 4 H(+). Specifically dimethylates two adjacent adenosines (A1518 and A1519) in the loop of a conserved hairpin near the 3'-end of 16S rRNA in the 30S particle. May play a critical role in biogenesis of 30S subunits. The protein is Ribosomal RNA small subunit methyltransferase A of Bacillus cereus (strain G9842).